The primary structure comprises 185 residues: GTP-dependent dephospho-CoA kinase (185 aa).

Residues aspartate 50, valine 52, aspartate 73, lysine 75, and glutamate 128 each contribute to the GTP site.

The protein belongs to the GTP-dependent DPCK family.

It carries out the reaction 3'-dephospho-CoA + GTP = GDP + CoA + H(+). The protein operates within cofactor biosynthesis; coenzyme A biosynthesis. Functionally, catalyzes the GTP-dependent phosphorylation of the 3'-hydroxyl group of dephosphocoenzyme A to form coenzyme A (CoA). This is GTP-dependent dephospho-CoA kinase from Aeropyrum pernix (strain ATCC 700893 / DSM 11879 / JCM 9820 / NBRC 100138 / K1).